The primary structure comprises 625 residues: MKNKTNLGLSVFFFFICLVSVTSDLEADRRALIALRDGVHGRPLLWNLTAPPCTWGGVQCESGRVTALRLPGVGLSGPLPIAIGNLTKLETLSFRFNALNGPLPPDFANLTLLRYLYLQGNAFSGEIPSFLFTLPNIIRINLAQNNFLGRIPDNVNSATRLATLYLQDNQLTGPIPEIKIKLQQFNVSSNQLNGSIPDPLSGMPKTAFLGNLLCGKPLDACPVNGTGNGTVTPGGKGKSDKLSAGAIVGIVIGCFVLLLVLFLIVFCLCRKKKKEQVVQSRSIEAAPVPTSSAAVAKESNGPPAVVANGASENGVSKNPAAVSKDLTFFVKSFGEFDLDGLLKASAEVLGKGTFGSSYKASFDHGLVVAVKRLRDVVVPEKEFREKLQVLGSISHANLVTLIAYYFSRDEKLVVFEYMSRGSLSALLHGNKGSGRSPLNWETRANIALGAARAISYLHSRDATTSHGNIKSSNILLSESFEAKVSDYCLAPMISPTSTPNRIDGYRAPEVTDARKISQKADVYSFGVLILELLTGKSPTHQQLHEEGVDLPRWVSSITEQQSPSDVFDPELTRYQSDSNENMIRLLNIGISCTTQYPDSRPTMPEVTRLIEEVSRSPASPGPLSD.

The first 23 residues, 1-23, serve as a signal peptide directing secretion; that stretch reads MKNKTNLGLSVFFFFICLVSVTS. LRR repeat units lie at residues 88 to 111, 112 to 134, 136 to 158, 160 to 182, and 183 to 204; these read KLETLSFRFNALNGPLPPDFANLT, LLRYLYLQGNAFSGEIPSFLFTL, NIIRINLAQNNFLGRIPDNVNSA, RLATLYLQDNQLTGPIPEIKIKL, and QQFNVSSNQLNGSIPDPLSGMP. Residues 246–266 form a helical membrane-spanning segment; sequence AIVGIVIGCFVLLLVLFLIVF. A Protein kinase domain is found at 343 to 613; that stretch reads KASAEVLGKG…PEVTRLIEEV (271 aa). Phosphoserine is present on Ser345. ATP contacts are provided by residues 349–357 and Lys371; that span reads LGKGTFGSS. Ser422 is modified (phosphoserine). Phosphothreonine occurs at positions 442 and 496. Position 517 is a phosphoserine (Ser517). Position 593 is a phosphothreonine (Thr593). Residues Ser619 and Ser624 each carry the phosphoserine modification.

It belongs to the protein kinase superfamily. Ser/Thr protein kinase family.

The protein resides in the cell membrane. Its function is as follows. Might be involved in early recognition of growth promoting fungi. Appears to be specific for P.indica. This is Probable inactive receptor kinase At5g16590 from Arabidopsis thaliana (Mouse-ear cress).